The primary structure comprises 133 residues: Small ribosomal subunit protein uS11 (133 aa).

It belongs to the universal ribosomal protein uS11 family. Part of the 30S ribosomal subunit.

Located on the platform of the 30S subunit. The chain is Small ribosomal subunit protein uS11 from Pyrobaculum aerophilum (strain ATCC 51768 / DSM 7523 / JCM 9630 / CIP 104966 / NBRC 100827 / IM2).